The following is a 48-amino-acid chain: Large ribosomal subunit protein bL33A (48 aa).

This sequence belongs to the bacterial ribosomal protein bL33 family.

This is Large ribosomal subunit protein bL33A from Bacillus anthracis.